A 451-amino-acid polypeptide reads, in one-letter code: Secreted RxLR effector protein 70 (451 aa).

Residues methionine 1 to serine 17 form the signal peptide. The short motif at arginine 48–arginine 65 is the RxLR-dEER element. The interval aspartate 303–phenylalanine 336 is disordered. Over residues proline 305–threonine 323 the composition is skewed to polar residues.

Belongs to the RxLR effector family.

Its subcellular location is the secreted. It localises to the host nucleus. In terms of biological role, secreted effector that completely suppresses the host cell death induced by cell death-inducing proteins. This is Secreted RxLR effector protein 70 from Plasmopara viticola (Downy mildew of grapevine).